A 478-amino-acid chain; its full sequence is Glutamate-1-semialdehyde 2,1-aminomutase, chloroplastic (478 aa).

At Lys-318 the chain carries N6-(pyridoxal phosphate)lysine.

Belongs to the class-III pyridoxal-phosphate-dependent aminotransferase family. HemL subfamily. In terms of assembly, homodimer. Requires pyridoxal 5'-phosphate as cofactor.

The protein resides in the plastid. It localises to the chloroplast. The enzyme catalyses (S)-4-amino-5-oxopentanoate = 5-aminolevulinate. Its pathway is porphyrin-containing compound metabolism; protoporphyrin-IX biosynthesis; 5-aminolevulinate from L-glutamyl-tRNA(Glu): step 2/2. The protein operates within porphyrin-containing compound metabolism; chlorophyll biosynthesis. This Nicotiana tabacum (Common tobacco) protein is Glutamate-1-semialdehyde 2,1-aminomutase, chloroplastic (GSA).